Here is a 456-residue protein sequence, read N- to C-terminus: Bifunctional protein GlmU (456 aa).

The pyrophosphorylase stretch occupies residues M1 to R229. UDP-N-acetyl-alpha-D-glucosamine-binding positions include L11–G14, K25, Q76, G81–T82, Y103–D105, G140, E154, N169, and N227. Position 105 (D105) interacts with Mg(2+). N227 lines the Mg(2+) pocket. Residues L230–S250 are linker. Residues G251–K456 are N-acetyltransferase. Residues R333 and K351 each contribute to the UDP-N-acetyl-alpha-D-glucosamine site. The active-site Proton acceptor is H363. Residues Y366 and N377 each contribute to the UDP-N-acetyl-alpha-D-glucosamine site. Residues A380, N386–Y387, S405, A423, and R440 contribute to the acetyl-CoA site.

In the N-terminal section; belongs to the N-acetylglucosamine-1-phosphate uridyltransferase family. This sequence in the C-terminal section; belongs to the transferase hexapeptide repeat family. As to quaternary structure, homotrimer. The cofactor is Mg(2+).

It is found in the cytoplasm. It catalyses the reaction alpha-D-glucosamine 1-phosphate + acetyl-CoA = N-acetyl-alpha-D-glucosamine 1-phosphate + CoA + H(+). The enzyme catalyses N-acetyl-alpha-D-glucosamine 1-phosphate + UTP + H(+) = UDP-N-acetyl-alpha-D-glucosamine + diphosphate. It participates in nucleotide-sugar biosynthesis; UDP-N-acetyl-alpha-D-glucosamine biosynthesis; N-acetyl-alpha-D-glucosamine 1-phosphate from alpha-D-glucosamine 6-phosphate (route II): step 2/2. The protein operates within nucleotide-sugar biosynthesis; UDP-N-acetyl-alpha-D-glucosamine biosynthesis; UDP-N-acetyl-alpha-D-glucosamine from N-acetyl-alpha-D-glucosamine 1-phosphate: step 1/1. Its pathway is bacterial outer membrane biogenesis; LPS lipid A biosynthesis. Its function is as follows. Catalyzes the last two sequential reactions in the de novo biosynthetic pathway for UDP-N-acetylglucosamine (UDP-GlcNAc). The C-terminal domain catalyzes the transfer of acetyl group from acetyl coenzyme A to glucosamine-1-phosphate (GlcN-1-P) to produce N-acetylglucosamine-1-phosphate (GlcNAc-1-P), which is converted into UDP-GlcNAc by the transfer of uridine 5-monophosphate (from uridine 5-triphosphate), a reaction catalyzed by the N-terminal domain. In Salmonella dublin (strain CT_02021853), this protein is Bifunctional protein GlmU.